Reading from the N-terminus, the 228-residue chain is DNA repair and recombination protein RadB (228 aa).

The protein belongs to the eukaryotic RecA-like protein family. RadB subfamily.

Its function is as follows. Involved in DNA repair and in homologous recombination. May regulate the cleavage reactions of the branch-structured DNA. Has a very weak ATPase activity that is not stimulated by DNA. Binds DNA but does not promote DNA strands exchange. The sequence is that of DNA repair and recombination protein RadB from Thermococcus sibiricus (strain DSM 12597 / MM 739).